A 367-amino-acid polypeptide reads, in one-letter code: Molybdopterin synthase catalytic subunit (367 aa).

Substrate is bound by residues 101–102, lysine 117, and 124–126; these read HR and KKE. The tract at residues 325–350 is disordered; it reads RHFTKREPSSMEAAPPKKSRKKSYSA.

It belongs to the MoaE family. MOCS2B subfamily. Heterotetramer; composed of 2 small (Mocs2A) and 2 large (Mocs2B) subunits. Component of the Ada2a-containing (ATAC) complex composed of at least Ada2a, Atac1, Hcf, Ada3, Gcn5, Mocs2B, Charac-14, Atac3, Atac2, NC2beta and wds.

Its subcellular location is the cytoplasm. It localises to the nucleus. It catalyses the reaction 2 [molybdopterin-synthase sulfur-carrier protein]-C-terminal-Gly-aminoethanethioate + cyclic pyranopterin phosphate + H2O = molybdopterin + 2 [molybdopterin-synthase sulfur-carrier protein]-C-terminal Gly-Gly + 2 H(+). It participates in cofactor biosynthesis; molybdopterin biosynthesis. Its function is as follows. Catalytic subunit of the molybdopterin synthase complex, a complex that catalyzes the conversion of precursor Z into molybdopterin. Acts by mediating the incorporation of 2 sulfur atoms from thiocarboxylated Mocs2A into precursor Z to generate a dithiolene group. Involved during biosynthesis of the molybdenum cofactor. This Drosophila melanogaster (Fruit fly) protein is Molybdopterin synthase catalytic subunit.